The primary structure comprises 131 residues: Small ribosomal subunit protein uS8 (131 aa).

Belongs to the universal ribosomal protein uS8 family. As to quaternary structure, part of the 30S ribosomal subunit. Contacts proteins S5 and S12.

One of the primary rRNA binding proteins, it binds directly to 16S rRNA central domain where it helps coordinate assembly of the platform of the 30S subunit. The protein is Small ribosomal subunit protein uS8 of Solibacter usitatus (strain Ellin6076).